Consider the following 81-residue polypeptide: D-alanyl carrier protein (81 aa).

Residues 1–81 (MADEAIKNGV…KIIAKVEQAQ (81 aa)) form the Carrier domain. Ser-39 bears the O-(pantetheine 4'-phosphoryl)serine mark.

This sequence belongs to the DltC family. 4'-phosphopantetheine is transferred from CoA to a specific serine of apo-DCP.

The protein localises to the cytoplasm. The protein operates within cell wall biogenesis; lipoteichoic acid biosynthesis. Its function is as follows. Carrier protein involved in the D-alanylation of lipoteichoic acid (LTA). The loading of thioester-linked D-alanine onto DltC is catalyzed by D-alanine--D-alanyl carrier protein ligase DltA. The DltC-carried D-alanyl group is further transferred to cell membrane phosphatidylglycerol (PG) by forming an ester bond, probably catalyzed by DltD. D-alanylation of LTA plays an important role in modulating the properties of the cell wall in Gram-positive bacteria, influencing the net charge of the cell wall. The sequence is that of D-alanyl carrier protein from Lacticaseibacillus casei (strain BL23) (Lactobacillus casei).